A 463-amino-acid chain; its full sequence is ATP-dependent protease ATPase subunit HslU (463 aa).

ATP-binding positions include Ile19, 61-66 (GVGKTE), Asp277, Glu341, and Arg413.

The protein belongs to the ClpX chaperone family. HslU subfamily. In terms of assembly, a double ring-shaped homohexamer of HslV is capped on each side by a ring-shaped HslU homohexamer. The assembly of the HslU/HslV complex is dependent on binding of ATP.

It localises to the cytoplasm. Functionally, ATPase subunit of a proteasome-like degradation complex; this subunit has chaperone activity. The binding of ATP and its subsequent hydrolysis by HslU are essential for unfolding of protein substrates subsequently hydrolyzed by HslV. HslU recognizes the N-terminal part of its protein substrates and unfolds these before they are guided to HslV for hydrolysis. This Bacillus cereus (strain AH187) protein is ATP-dependent protease ATPase subunit HslU.